A 220-amino-acid chain; its full sequence is Histone H1B (220 aa).

Disordered regions lie at residues 1–45 and 99–220; these read MTAT…PSAS and QVKG…APKK. Over residues 28–45 the composition is skewed to low complexity; that stretch reads KKVAGGAKAKKPSGPSAS. Residues 40-113 enclose the H15 domain; it reads SGPSASELIV…GASGSFKLNK (74 aa). 4 stretches are compositionally biased toward basic residues: residues 122 to 134, 141 to 151, 158 to 196, and 204 to 220; these read AAKK…KAKK, KAPKSPKKPKK, SPKK…KPKT, and KVAK…APKK.

The protein belongs to the histone H1/H5 family.

It localises to the nucleus. The protein localises to the chromosome. In terms of biological role, histones H1 are necessary for the condensation of nucleosome chains into higher-order structures. In Xenopus laevis (African clawed frog), this protein is Histone H1B.